The following is a 498-amino-acid chain: ATP synthase subunit beta, chloroplastic (498 aa).

172-179 (GGAGVGKT) lines the ATP pocket.

It belongs to the ATPase alpha/beta chains family. As to quaternary structure, F-type ATPases have 2 components, CF(1) - the catalytic core - and CF(0) - the membrane proton channel. CF(1) has five subunits: alpha(3), beta(3), gamma(1), delta(1), epsilon(1). CF(0) has four main subunits: a(1), b(1), b'(1) and c(9-12).

The protein localises to the plastid. The protein resides in the chloroplast thylakoid membrane. The catalysed reaction is ATP + H2O + 4 H(+)(in) = ADP + phosphate + 5 H(+)(out). Functionally, produces ATP from ADP in the presence of a proton gradient across the membrane. The catalytic sites are hosted primarily by the beta subunits. The chain is ATP synthase subunit beta, chloroplastic from Aspidistra elatior (Cast-iron plant).